The sequence spans 72 residues: Large ribosomal subunit protein bL31 (72 aa).

Positions 16, 18, 38, and 41 each coordinate Zn(2+).

The protein belongs to the bacterial ribosomal protein bL31 family. Type A subfamily. Part of the 50S ribosomal subunit. Zn(2+) serves as cofactor.

Its function is as follows. Binds the 23S rRNA. The sequence is that of Large ribosomal subunit protein bL31 from Vibrio atlanticus (strain LGP32) (Vibrio splendidus (strain Mel32)).